We begin with the raw amino-acid sequence, 732 residues long: Small conductance calcium-activated potassium channel protein 3 (732 aa).

Residues 1 to 11 (MDTSGHFHDSG) are compositionally biased toward basic and acidic residues. Disordered stretches follow at residues 1–82 (MDTS…QQAP) and 103–162 (HSSP…ASPL). The segment covering 35–59 (QPPPPSAPPAVPQQPPGPLLQPQPP) has biased composition (pro residues). Positions 60-82 (QLQQQQQQQQQQQQQQQQQQQAP) are enriched in low complexity. Positions 113 to 133 (NSANSTAILHPSSRQGSQLNL) are enriched in polar residues. A compositionally biased stretch (low complexity) spans 139–148 (GHSPSSTATS). Ser-168 is modified (phosphoserine). The span at 241-257 (THNHQHAGTTAGSTTFP) shows a compositional bias: polar residues. A disordered region spans residues 241–260 (THNHQHAGTTAGSTTFPKAN). Residues 289-309 (LIFGMFGIVVMVIETELSWGL) form a helical membrane-spanning segment. The chain crosses the membrane as a helical span at residues 316–336 (FSLALKCLISLSTIILLGLII). A helical transmembrane segment spans residues 367 to 387 (ISLEMLVCAIHPIPGEYKFFW). The chain crosses the membrane as a helical span at residues 406-426 (IILSIPMFLRLYLIARVMLLH). Residues 455–475 (LMTICPGTVLLVFSISLWIIA) traverse the membrane as a helical segment. The segment at residues 495–515 (FLGAMWLISITFLSIGYGDMV) is an intramembrane region (pore-forming). Residues 524-544 (VCLLTGIMGAGCTALVVAVVA) form a helical membrane-spanning segment. A calmodulin-binding region spans residues 562-638 (DTQLTKRIKN…LVDLSKMQNV (77 aa)). Positions 643–670 (ITELNDRSEDLEKQIGSLESKLEHLTAS) form a coiled coil. The disordered stretch occupies residues 704 to 732 (GTSHAPPSDSPIGISSTSFPTPYTSSSSC). Low complexity predominate over residues 718–732 (SSTSFPTPYTSSSSC).

It belongs to the potassium channel KCNN family. KCa2.3/KCNN3 subfamily. As to quaternary structure, homodimer. Heteromultimer with KCNN2 or KCNN1; this modulates plasma membrane expression and consequently the small conductance calcium-activated potassium channel activity. The complex is composed of 4 channel subunits each of which binds to a calmodulin subunit which regulates the channel activity through calcium-binding. Interacts with CALM1.

Its subcellular location is the cell membrane. It localises to the cytoplasm. The protein localises to the myofibril. The protein resides in the sarcomere. It is found in the z line. It carries out the reaction K(+)(in) = K(+)(out). With respect to regulation, inhibited by bee venom neurotoxin apamin. In terms of biological role, small conductance calcium-activated potassium channel that mediates the voltage-independent transmembrane transfer of potassium across the cell membrane through a constitutive interaction with calmodulin which binds the intracellular calcium allowing its opening. The current is characterized by a voltage-independent activation, an intracellular calcium concentration increase-dependent activation and a single-channel conductance of 10 picosiemens. Also presents an inwardly rectifying current, thus reducing its already small outward conductance of potassium ions, which is particularly the case when the membrane potential displays positive values, above + 20 mV. Activation is followed by membrane hyperpolarization. Thought to regulate neuronal excitability by contributing to the slow component of synaptic afterhyperpolarization. This Rattus norvegicus (Rat) protein is Small conductance calcium-activated potassium channel protein 3.